Consider the following 556-residue polypeptide: Potassium-transporting ATPase potassium-binding subunit (556 aa).

10 helical membrane-spanning segments follow: residues 1–21, 60–80, 130–150, 173–193, 245–265, 281–301, 374–394, 416–436, 482–502, and 529–549; these read MTWICFLAGLALLAIALGIAQ, SYARAVLAFSFCGVVFLYALQ, GLCVQNFVSAATGIAIAVALI, LRILMPIAAVAAFLLIAGGAV, PQPWTNMLEIFLILLIPFSLP, ILAAMVVLFTVNLCAMAAAEF, GLYGMLVIAVIAVFIAGLLVG, ILVMPTLVLCGVALSLAVPGL, AALGAAMLLGRFVPIILILAL, and LIVFTAILVTALVFFPVLTLG.

This sequence belongs to the KdpA family. In terms of assembly, the system is composed of three essential subunits: KdpA, KdpB and KdpC.

The protein resides in the cell membrane. Part of the high-affinity ATP-driven potassium transport (or Kdp) system, which catalyzes the hydrolysis of ATP coupled with the electrogenic transport of potassium into the cytoplasm. This subunit binds the extracellular potassium ions and delivers the ions to the membrane domain of KdpB through an intramembrane tunnel. This is Potassium-transporting ATPase potassium-binding subunit from Cutibacterium acnes (strain DSM 16379 / KPA171202) (Propionibacterium acnes).